A 269-amino-acid chain; its full sequence is HTH-type transcriptional regulator Rv0792c (269 aa).

The HTH gntR-type domain occupies 20–88 (VPASTQLAEA…QGLGTFVADP (69 aa)). The H-T-H motif DNA-binding region spans 48 to 67 (ERELIDRSGLSRVTVRAAVG).

As to quaternary structure, homodimer.

With respect to regulation, DNA-binding activity is increased in the presence of L-arabinose and inhibited by the small molecule I-OMe-Tyrphostin. Its function is as follows. Transcriptional regulator required for survival in oxidative stress and for establishing infection in host tissues. Regulates the expression of a subset of genes involved in oxidative stress adaptation and virulence, enabling the bacteria to adapt and persist in host tissues. The chain is HTH-type transcriptional regulator Rv0792c from Mycobacterium tuberculosis (strain ATCC 25618 / H37Rv).